The chain runs to 184 residues: Crossover junction endodeoxyribonuclease RuvC (184 aa).

Residues Asp7, Glu68, and Asp141 contribute to the active site. Mg(2+) contacts are provided by Asp7, Glu68, and Asp141.

This sequence belongs to the RuvC family. In terms of assembly, homodimer which binds Holliday junction (HJ) DNA. The HJ becomes 2-fold symmetrical on binding to RuvC with unstacked arms; it has a different conformation from HJ DNA in complex with RuvA. In the full resolvosome a probable DNA-RuvA(4)-RuvB(12)-RuvC(2) complex forms which resolves the HJ. Mg(2+) serves as cofactor.

The protein localises to the cytoplasm. It carries out the reaction Endonucleolytic cleavage at a junction such as a reciprocal single-stranded crossover between two homologous DNA duplexes (Holliday junction).. Its function is as follows. The RuvA-RuvB-RuvC complex processes Holliday junction (HJ) DNA during genetic recombination and DNA repair. Endonuclease that resolves HJ intermediates. Cleaves cruciform DNA by making single-stranded nicks across the HJ at symmetrical positions within the homologous arms, yielding a 5'-phosphate and a 3'-hydroxyl group; requires a central core of homology in the junction. The consensus cleavage sequence is 5'-(A/T)TT(C/G)-3'. Cleavage occurs on the 3'-side of the TT dinucleotide at the point of strand exchange. HJ branch migration catalyzed by RuvA-RuvB allows RuvC to scan DNA until it finds its consensus sequence, where it cleaves and resolves the cruciform DNA. This is Crossover junction endodeoxyribonuclease RuvC from Mycobacterium ulcerans (strain Agy99).